The sequence spans 101 residues: opdI (101 aa).

A helical membrane pass occupies residues 30 to 49 (GGMGGALKIVFLGMMTYFIA). The interval 56–101 (SQHPPTDFNAPVQSVPQRAQRPSDTRLQGPVLLASNHPSGDSASPE) is disordered. 2 stretches are compositionally biased toward polar residues: residues 66–81 (PVQSVPQRAQRPSDTR) and 91–101 (NHPSGDSASPE).

It is found in the membrane. Functionally, part of the gene cluster that mediates the biosynthesis of oxopyrrolidines, polyketide-amino acid hybrid compounds with feature structures of tetramic acid. Does not seem to play a role in oxopyrrolidines A and B biosynthesis. This chain is opdI, found in Penicillium oxalicum (strain 114-2 / CGMCC 5302) (Penicillium decumbens).